Here is an 87-residue protein sequence, read N- to C-terminus: U3-theraphotoxin-Hhn1a 3 (87 aa).

The first 24 residues, 1–24 (MVNMKASMFLTFAGLVLLFVVCYA), serve as a signal peptide directing secretion. Positions 25-52 (PESEEKEFPKEMLSSIFAVDNDFKQEER) are excised as a propeptide. 3 disulfides stabilise this stretch: Cys-54–Cys-67, Cys-61–Cys-72, and Cys-66–Cys-79.

Belongs to the neurotoxin 10 (Hwtx-1) family. 51 (Hntx-8) subfamily. Hntx-8 sub-subfamily. As to expression, expressed by the venom gland.

Its subcellular location is the secreted. In terms of biological role, ion channel inhibitor. This is U3-theraphotoxin-Hhn1a 3 from Cyriopagopus hainanus (Chinese bird spider).